Consider the following 299-residue polypeptide: tRNA dimethylallyltransferase (299 aa).

11–18 (GPTAVGKT) is an ATP binding site. 13–18 (TAVGKT) provides a ligand contact to substrate. Positions 36–39 (DSQQ) are interaction with substrate tRNA.

It belongs to the IPP transferase family. In terms of assembly, monomer. It depends on Mg(2+) as a cofactor.

The catalysed reaction is adenosine(37) in tRNA + dimethylallyl diphosphate = N(6)-dimethylallyladenosine(37) in tRNA + diphosphate. Its function is as follows. Catalyzes the transfer of a dimethylallyl group onto the adenine at position 37 in tRNAs that read codons beginning with uridine, leading to the formation of N6-(dimethylallyl)adenosine (i(6)A). In Streptococcus pyogenes serotype M12 (strain MGAS2096), this protein is tRNA dimethylallyltransferase.